Reading from the N-terminus, the 297-residue chain is Palmitoyl-protein thioesterase ABHD10, mitochondrial (297 aa).

Residues 1–43 (MAAWAPCRRWGWAAVSFGRHPGLSASLARKPPRAWWLSACRQK) constitute a mitochondrion transit peptide. Residues 69 to 196 (IIFIPGYLSN…EIEMKGEWTL (128 aa)) enclose the AB hydrolase-1 domain. Residues serine 143, aspartate 240, and histidine 270 each act as charge relay system in the active site.

The protein belongs to the AB hydrolase superfamily.

It is found in the mitochondrion. It catalyses the reaction S-hexadecanoyl-L-cysteinyl-[protein] + H2O = L-cysteinyl-[protein] + hexadecanoate + H(+). The catalysed reaction is mycophenolic acid O-acyl-beta-D-glucuronide + H2O = mycophenolate + D-glucuronate + H(+). Its activity is regulated as follows. Inhibited by palmostatin-B. Its function is as follows. Acts as an acyl-protein thioesterase that hydrolyzes fatty acids from acylated residues in proteins. Regulates the mitochondrial S-depalmitoylation of the nucleophilic active site residue of peroxiredoxin-5/PRDX5, a key antioxidant protein, therefore modulating mitochondrial antioxidant ability. Also catalyzes the deglucuronidation of mycophenolic acid acyl-glucuronide, an active metabolite of the immunosuppressant drug mycophenolate. The protein is Palmitoyl-protein thioesterase ABHD10, mitochondrial of Mus musculus (Mouse).